A 333-amino-acid chain; its full sequence is L-lactate dehydrogenase A chain (333 aa).

Residue Ala2 is modified to N-acetylalanine. NAD(+) is bound by residues 30-58 and Arg100; that span reads GAVGMACAISILMKDLADEVALVDVMEDK. Residues Arg107, Asn139, and Arg170 each contribute to the substrate site. Asn139 serves as a coordination point for NAD(+). The active-site Proton acceptor is His194. Residue Thr249 coordinates substrate.

This sequence belongs to the LDH/MDH superfamily. LDH family. As to quaternary structure, homotetramer.

Its subcellular location is the cytoplasm. The enzyme catalyses (S)-lactate + NAD(+) = pyruvate + NADH + H(+). The protein operates within fermentation; pyruvate fermentation to lactate; (S)-lactate from pyruvate: step 1/1. Its function is as follows. Interconverts simultaneously and stereospecifically pyruvate and lactate with concomitant interconversion of NADH and NAD(+). This chain is L-lactate dehydrogenase A chain (ldha), found in Squalus acanthias (Spiny dogfish).